The chain runs to 500 residues: Cytochrome P450 11B2, mitochondrial (500 aa).

The transit peptide at 1 to 24 (MALRVTADVWLARPWQCLHRTRAL) directs the protein to the mitochondrion. A 21-hydroxyprogesterone-binding site is contributed by Phe381. A heme-binding site is contributed by Cys447.

This sequence belongs to the cytochrome P450 family. Heme serves as cofactor.

The protein resides in the mitochondrion inner membrane. The enzyme catalyses a steroid + 2 reduced [adrenodoxin] + O2 + 2 H(+) = an 11beta-hydroxysteroid + 2 oxidized [adrenodoxin] + H2O. It catalyses the reaction 21-hydroxyprogesterone + 2 reduced [adrenodoxin] + O2 + 2 H(+) = corticosterone + 2 oxidized [adrenodoxin] + H2O. It carries out the reaction corticosterone + 2 reduced [adrenodoxin] + O2 + 2 H(+) = 18-hydroxycorticosterone + 2 oxidized [adrenodoxin] + H2O. The catalysed reaction is 18-hydroxycorticosterone + 2 reduced [adrenodoxin] + O2 + 2 H(+) = aldosterone + 2 oxidized [adrenodoxin] + 2 H2O. The enzyme catalyses 11-deoxycortisol + 2 reduced [adrenodoxin] + O2 + 2 H(+) = cortisol + 2 oxidized [adrenodoxin] + H2O. It catalyses the reaction 21-hydroxyprogesterone + 2 reduced [adrenodoxin] + O2 + 2 H(+) = 18-hydroxy-11-deoxycorticosterone + 2 oxidized [adrenodoxin] + H2O. It carries out the reaction cortisol + 2 reduced [adrenodoxin] + O2 + 2 H(+) = 18-hydroxycortisol + 2 oxidized [adrenodoxin] + H2O. The catalysed reaction is 18-hydroxycortisol + 2 reduced [adrenodoxin] + O2 + 2 H(+) = 18-oxocortisol + 2 oxidized [adrenodoxin] + 2 H2O. It participates in steroid biosynthesis. In terms of biological role, a cytochrome P450 monooxygenase that catalyzes the biosynthesis of aldosterone, the main mineralocorticoid in the human body responsible for salt and water homeostasis, thus involved in blood pressure regulation, arterial hypertension, and the development of heart failure. Catalyzes three sequential oxidative reactions of 11-deoxycorticosterone (21-hydroxyprogesterone), namely 11-beta hydroxylation, followed by two successive oxidations at C18 yielding 18-hydroxy and then 18-oxo intermediates (that would not leave the enzyme active site during the consecutive hydroxylation reactions), ending with the formation of aldosterone. Can also produce 18-hydroxycortisol and 18-oxocortisol, derived from successive oxidations of cortisol at C18, normally found at very low levels, but significantly increased in primary aldosteronism, the most common form of secondary hypertension. Mechanistically, uses molecular oxygen inserting one oxygen atom into a substrate and reducing the second into a water molecule. Two electrons are provided by NADPH via a two-protein mitochondrial transfer system comprising flavoprotein FDXR (adrenodoxin/ferredoxin reductase) and nonheme iron-sulfur protein FDX1 or FDX2 (adrenodoxin/ferredoxin). Could also be involved in the androgen metabolic pathway. The sequence is that of Cytochrome P450 11B2, mitochondrial (Cyp11b2) from Mus musculus (Mouse).